Reading from the N-terminus, the 716-residue chain is Penicillin-binding protein 2A (716 aa).

Residues 22 to 42 (LNILFLAAFVIFTWIIVELGI) traverse the membrane as a helical segment. Catalysis depends on Ser397, which acts as the Acyl-ester intermediate. Basic and acidic residues predominate over residues 689–706 (SKQDKEGTQQKNKDKIEE). The segment at 689 to 716 (SKQDKEGTQQKNKDKIEENAENTTSSDN) is disordered.

It belongs to the transpeptidase family.

It localises to the cell membrane. It is found in the forespore inner membrane. It catalyses the reaction Preferential cleavage: (Ac)2-L-Lys-D-Ala-|-D-Ala. Also transpeptidation of peptidyl-alanyl moieties that are N-acyl substituents of D-alanine.. It participates in cell wall biogenesis; peptidoglycan biosynthesis. In terms of biological role, involved in the synthesis of peptidoglycan associated with cell wall elongation, especially following spore germination. Has a partially redundant function with PBP 1 (ponA) or PBP 4 (pbpD) during spore outgrowth. Plays a redundant role with PbpH in determining the rod shape of the cell during vegetative growth and spore outgrowth. This is Penicillin-binding protein 2A from Bacillus subtilis (strain 168).